The following is a 677-amino-acid chain: Transketolase (677 aa).

H27 is a binding site for substrate. Thiamine diphosphate contacts are provided by residues H66 and 114 to 116 (GPL). A Mg(2+)-binding site is contributed by D155. G156 and N185 together coordinate thiamine diphosphate. Mg(2+)-binding residues include N185 and I187. 3 residues coordinate substrate: H261, R356, and S383. Residue H261 coordinates thiamine diphosphate. Positions 415 and 442 each coordinate thiamine diphosphate. E415 (proton donor) is an active-site residue. Substrate is bound by residues H466, D474, and R525.

It belongs to the transketolase family. Homodimer. The cofactor is Mg(2+). Requires Ca(2+) as cofactor. Mn(2+) is required as a cofactor. It depends on Co(2+) as a cofactor. Thiamine diphosphate serves as cofactor.

It catalyses the reaction D-sedoheptulose 7-phosphate + D-glyceraldehyde 3-phosphate = aldehydo-D-ribose 5-phosphate + D-xylulose 5-phosphate. Its function is as follows. Catalyzes the transfer of a two-carbon ketol group from a ketose donor to an aldose acceptor, via a covalent intermediate with the cofactor thiamine pyrophosphate. The protein is Transketolase (TKT) of Scheffersomyces stipitis (strain ATCC 58785 / CBS 6054 / NBRC 10063 / NRRL Y-11545) (Yeast).